The sequence spans 124 residues: Fluoride-specific ion channel FluC (124 aa).

Helical transmembrane passes span 36-56 (VGTM…VVVL), 63-83 (YAPF…AFSL), and 99-119 (AYVG…MAAV). 2 residues coordinate Na(+): Gly-73 and Thr-76.

The protein belongs to the fluoride channel Fluc/FEX (TC 1.A.43) family.

The protein localises to the cell inner membrane. It carries out the reaction fluoride(in) = fluoride(out). Na(+) is not transported, but it plays an essential structural role and its presence is essential for fluoride channel function. Functionally, fluoride-specific ion channel. Important for reducing fluoride concentration in the cell, thus reducing its toxicity. The chain is Fluoride-specific ion channel FluC from Cereibacter sphaeroides (strain ATCC 17029 / ATH 2.4.9) (Rhodobacter sphaeroides).